The sequence spans 640 residues: Threonine--tRNA ligase (640 aa).

A TGS domain is found at 1 to 59 (MKIKVKLPDGKEKEYDRGITPAEIAKELGIKKAIGAVVNGELWDLKRPIENDCELRLVT). The catalytic stretch occupies residues 240-531 (DHRKLGPQLE…LIEHFAGAFP (292 aa)). Residues cysteine 332, histidine 383, and histidine 508 each coordinate Zn(2+).

This sequence belongs to the class-II aminoacyl-tRNA synthetase family. As to quaternary structure, homodimer. Zn(2+) is required as a cofactor.

It is found in the cytoplasm. The catalysed reaction is tRNA(Thr) + L-threonine + ATP = L-threonyl-tRNA(Thr) + AMP + diphosphate + H(+). Its function is as follows. Catalyzes the attachment of threonine to tRNA(Thr) in a two-step reaction: L-threonine is first activated by ATP to form Thr-AMP and then transferred to the acceptor end of tRNA(Thr). Also edits incorrectly charged L-seryl-tRNA(Thr). This is Threonine--tRNA ligase from Thermotoga maritima (strain ATCC 43589 / DSM 3109 / JCM 10099 / NBRC 100826 / MSB8).